Consider the following 189-residue polypeptide: Selenoprotein S (189 aa).

Residues 29–49 (VVLSSYGWYILLGCILIYLLI) form a helical membrane-spanning segment. A compositionally biased stretch (basic and acidic residues) spans 114–125 (IETWDRMKEGKS). The disordered stretch occupies residues 114–189 (IETWDRMKEG…RRGPSSGGUG (76 aa)). Over residues 136–147 (PSPSTSTSAATK) the composition is skewed to low complexity. Basic and acidic residues predominate over residues 148-157 (PKQEKQERKT). A non-standard amino acid (selenocysteine) is located at residue selenocysteine 188.

This sequence belongs to the selenoprotein S family.

The protein localises to the endoplasmic reticulum membrane. It is found in the cytoplasm. Involved in the degradation process of misfolded endoplasmic reticulum (ER) luminal proteins. Participates in the transfer of misfolded proteins from the ER to the cytosol, where they are destroyed by the proteasome in a ubiquitin-dependent manner. In Xenopus tropicalis (Western clawed frog), this protein is Selenoprotein S (vimp).